Here is a 204-residue protein sequence, read N- to C-terminus: Urease accessory protein UreG (204 aa).

Residue 12-19 (GPVGSGKT) participates in GTP binding.

This sequence belongs to the SIMIBI class G3E GTPase family. UreG subfamily. As to quaternary structure, homodimer. UreD, UreF and UreG form a complex that acts as a GTP-hydrolysis-dependent molecular chaperone, activating the urease apoprotein by helping to assemble the nickel containing metallocenter of UreC. The UreE protein probably delivers the nickel.

It localises to the cytoplasm. Functionally, facilitates the functional incorporation of the urease nickel metallocenter. This process requires GTP hydrolysis, probably effectuated by UreG. In Pseudomonas paraeruginosa (strain DSM 24068 / PA7) (Pseudomonas aeruginosa (strain PA7)), this protein is Urease accessory protein UreG.